The chain runs to 337 residues: L-Ala-D/L-amino acid epimerase (337 aa).

Residues T129 and 151–153 (KIK) each bind substrate. D177, E203, and D228 together coordinate Mg(2+). Substrate-binding positions include K250 and 300–302 (DMD).

It belongs to the mandelate racemase/muconate lactonizing enzyme family. The cofactor is Mg(2+).

In terms of biological role, broad specificity dipeptide epimerase. Catalyzes the epimerization of L-Ala-L-Ala, L-Ala-L-Glu, L-Ala-L-Ser, L-Ala-L-Thr and L-Ala-L-Met (in vitro). The sequence is that of L-Ala-D/L-amino acid epimerase from Maribacter sp. (strain HTCC2170 / KCCM 42371).